Reading from the N-terminus, the 177-residue chain is MNTPVGVAEIVLGPGEVVFQTRPTRLRTLLGSCVAITFWHPWRRIGGMCHFMLPGRIRRHQPLDGRYADEAMEILIRHALANGTLPEEYQVKLFGGGEMFPAHRHDPHMRNVADSNVHAALALAEQNRLKLMAQDLGSTGHRSIIFDLWDGNVWVRHQPMEAMEKDAKQKNQRTAGR.

Belongs to the CheD family.

It catalyses the reaction L-glutaminyl-[protein] + H2O = L-glutamyl-[protein] + NH4(+). Functionally, probably deamidates glutamine residues to glutamate on methyl-accepting chemotaxis receptors (MCPs), playing an important role in chemotaxis. This chain is Probable chemoreceptor glutamine deamidase CheD, found in Pseudomonas syringae pv. syringae (strain B728a).